A 279-amino-acid polypeptide reads, in one-letter code: Homeobox protein BarH-like 2 (279 aa).

Disordered stretches follow at residues 110 to 137 (APGG…RRSR) and 194 to 279 (KGGQ…PPLS). The segment covering 118 to 128 (SSESETEQPTP) has biased composition (polar residues). A DNA-binding region (homeobox) is located at residues 133 to 192 (PRRSRTIFTELQLMGLEKKFQKQKYLSTPDRLDLAQSLGLTQLQVKTWYQNRRMKWKKMV). Over residues 225–240 (NSQAQGQEQLEPSQGQ) the composition is skewed to polar residues. Positions 261–279 (PPDPPQELPIPSSEPPPLS) are enriched in pro residues.

The protein belongs to the BAR homeobox family. As to expression, highly expressed in adult salivary gland and at much lower levels in mammary gland, kidney and placenta.

It is found in the nucleus. Transcription factor. Binds optimally to the DNA consensus sequence 5'-YYTAATGRTTTTY-3'. May control the expression of neural adhesion molecules such as L1 or Ng-CAM during embryonic development of both the central and peripherical nervous system. May be involved in controlling adhesive processes in keratinizing epithelia. This is Homeobox protein BarH-like 2 (BARX2) from Homo sapiens (Human).